The chain runs to 550 residues: Arginine--tRNA ligase (550 aa).

The 'HIGH' region signature appears at 130 to 140 (ANPTGPIHLGG).

It belongs to the class-I aminoacyl-tRNA synthetase family. In terms of assembly, monomer.

The protein resides in the cytoplasm. The catalysed reaction is tRNA(Arg) + L-arginine + ATP = L-arginyl-tRNA(Arg) + AMP + diphosphate. The sequence is that of Arginine--tRNA ligase from Corynebacterium efficiens (strain DSM 44549 / YS-314 / AJ 12310 / JCM 11189 / NBRC 100395).